We begin with the raw amino-acid sequence, 206 residues long: MARAALIVCLLMACAWSSHAVMFKLSPNTQKCLKEDIQANQLVMGEYEVSDVPGQIIDYIARDTKGHILSQKEHITKGKFSFMSEVYDAYEICFISKVPAHQRGIVQEVSLLTKKGVETKSYEGIGEASKLKPLEVDLKRLEDLSDSIVRDFVLMRKREEEMRDTNEKTNSRVLFFSIFSMCCLLGLATWQVLYLRRYFKAKKLIE.

An N-terminal signal peptide occupies residues 1–20 (MARAALIVCLLMACAWSSHA). The Lumenal portion of the chain corresponds to 21–172 (VMFKLSPNTQ…RDTNEKTNSR (152 aa)). The 111-residue stretch at 30-140 (QKCLKEDIQA…LKPLEVDLKR (111 aa)) folds into the GOLD domain. The chain crosses the membrane as a helical span at residues 173–193 (VLFFSIFSMCCLLGLATWQVL). The Cytoplasmic segment spans residues 194-206 (YLRRYFKAKKLIE).

This sequence belongs to the EMP24/GP25L family.

It localises to the membrane. Its function is as follows. Eca and bai are essential, though not redundant, for dorsoventral patterning of the embryo. Specifically required during early embryogenesis for the activity of maternal tkv, while the zygotic tkv is not affected. The chain is Transmembrane emp24 domain-containing protein bai from Drosophila erecta (Fruit fly).